We begin with the raw amino-acid sequence, 189 residues long: Thermostable direct hemolysin 2 (189 aa).

The signal sequence occupies residues 1–24 (MKYRYFAKKSFLFISMLAAFKTFA). A disulfide bond links Cys-175 and Cys-185.

This sequence belongs to the TDH hemolysin family. In terms of assembly, homodimer.

Its function is as follows. Bacterial hemolysins are exotoxins that attack blood cell membranes and cause cell rupture by mechanisms not clearly defined. This Vibrio parahaemolyticus serotype O3:K6 (strain RIMD 2210633) protein is Thermostable direct hemolysin 2 (tdh2).